Here is a 372-residue protein sequence, read N- to C-terminus: MNLEEENTIFKPLYSLKHSPINAYFSKNSDDFVVRERPLYEFSGKGEHLILHINKKDLTTNEALKILSETSGVKIRDFGYAGLKDKQGSTFQYLSMPKKFESFLSNFSHPKLKILEIFTHENKLRIGHLKGNTFFIRLKKVLPSDALKLEQALMNLDKQGFANYFGYQRFGKFGDNYKEGFEILRGKKMKNVKMKEFLISAFQSELFNRYLSKRVELSHFANDFSEKELIQIYKISKEEAKELKKQEQFFKLLKGEVLGHYPFGKCFLCEDLSAELERFKARDISAMGLLIGAKAYETGEGLALNLENEIFKDALEFKAKMQGSRRFMWGYLEELKWRYDEEKAHFCIEFFLQKGSYATVVLEEILHKNLFE.

The active-site Nucleophile is the Asp-85. The TRUD domain maps to 160 to 330; it reads GFANYFGYQR…MQGSRRFMWG (171 aa).

Belongs to the pseudouridine synthase TruD family.

It catalyses the reaction uridine(13) in tRNA = pseudouridine(13) in tRNA. Functionally, responsible for synthesis of pseudouridine from uracil-13 in transfer RNAs. The protein is tRNA pseudouridine synthase D of Campylobacter jejuni subsp. jejuni serotype O:6 (strain 81116 / NCTC 11828).